The primary structure comprises 470 residues: MPADLAARTSSKIFNGVDLMDASARADNAFYLDRQERRESNARSYPRRFPVALKSASGCIVTDVDGRSYLDCLAGAGTLALGHNHPEVIETLQQVLGSGLPLHTLDLTTPVKDRFVSDIFGTLPAGLRDEAKIQFCSPSGTDAVEAAIKLAKTATGRTDLVSFRGAYHGMSQGSLSLMGSLGPKASVGQLVPGAHFFPYPYAYRCPFGRGGNETATLAAEYFERALRDPEGGINRPAAVILEAVQGEGGVIPAPVEWLRAVRRVTRDLGIPLIVDEVQSGVGRTGSFYAFQKAGIIPDVVVLSKAIGGGLPLAVVIYREDLDLWKPGAHAGTFRGNQLAMAAGSKTLEIIERERLVERAAIAGRRLRANLERIAAQTPYIGEVRGEGLMLGVEVVDPEGLPDALGHPPHGQEIARMIQHEMFRAGIILETGGRFGSVLRLLPPLVISDAEIDQVSGALAAAFERLGRKAA.

K304 carries the N6-(pyridoxal phosphate)lysine modification.

The protein belongs to the class-III pyridoxal-phosphate-dependent aminotransferase family. Pyridoxal 5'-phosphate serves as cofactor.

The enzyme catalyses L-2,4-diaminobutanoate + 2-oxoglutarate = L-aspartate 4-semialdehyde + L-glutamate. The protein operates within siderophore biosynthesis; rhizobactin biosynthesis. In Rhizobium meliloti (strain 1021) (Ensifer meliloti), this protein is Diaminobutyrate--2-oxoglutarate aminotransferase (rhbA).